A 238-amino-acid polypeptide reads, in one-letter code: Large ribosomal subunit protein uL1 (238 aa).

The protein belongs to the universal ribosomal protein uL1 family. As to quaternary structure, part of the 50S ribosomal subunit.

Binds directly to 23S rRNA. The L1 stalk is quite mobile in the ribosome, and is involved in E site tRNA release. In terms of biological role, protein L1 is also a translational repressor protein, it controls the translation of the L11 operon by binding to its mRNA. The sequence is that of Large ribosomal subunit protein uL1 from Nostoc sp. (strain PCC 7120 / SAG 25.82 / UTEX 2576).